Here is a 382-residue protein sequence, read N- to C-terminus: Probable G-protein coupled receptor 132 (382 aa).

Residues 1–42 (MRSEPTNAAGNTTLGVTSVLQSTSVPSSETCHVSYEESRVVL) are Extracellular-facing. The N-linked (GlcNAc...) asparagine glycan is linked to Asn11. A helical transmembrane segment spans residues 43-65 (VVVYSAVCLLGLPANCLTAWLTL). The Cytoplasmic portion of the chain corresponds to 66-76 (LQVLQRNVLAV). The chain crosses the membrane as a helical span at residues 77–99 (YLFCLSLCELLYISTVPLWIIYI). The Extracellular portion of the chain corresponds to 100–113 (QNQHKWNLGPQACK). Cysteines 112 and 184 form a disulfide. A helical transmembrane segment spans residues 114 to 135 (VTAYIFFCNIYISILLLCCISC). Topologically, residues 136 to 155 (DRYMAVVYALESRGHRHQRT) are cytoplasmic. Residues 156–175 (AVTISACVILLVGLVNYPVF) traverse the membrane as a helical segment. The Extracellular segment spans residues 176-198 (DMKVEKSFCFEPLRMNSKIAGYH). A helical membrane pass occupies residues 199–221 (YLRFTFGFAIPLGILAFTNHQIF). Residues 222-241 (RSIKLSDSLSAAQKNKVKRS) are Cytoplasmic-facing. A helical transmembrane segment spans residues 242–261 (AIAVVTIFLVCFAPYHVVLL). Topologically, residues 262-286 (VKAASFSFYQGDMDAVCAFESRLYT) are extracellular. Residues 287–309 (VSMVFLCLSTVNSVADPIIYVLG) form a helical membrane-spanning segment. Residues 310–382 (TDHSRQEVSR…SPERLPEELC (73 aa)) are Cytoplasmic-facing.

Belongs to the G-protein coupled receptor 1 family. Highly expressed in hematopoietic tissues rich in lymphocytes like spleen and thymus. Weakly expressed in heart and lung. Highly expressed in infiltrating macrophages within atherosclerotic lesions.

The protein resides in the cell membrane. Its function is as follows. May be a receptor for oxidized free fatty acids derived from linoleic and arachidonic acids such as 9-hydroxyoctadecadienoic acid (9-HODE). Activates a G alpha protein, most likely G alpha(q). May be involved in apoptosis. Functions at the G2/M checkpoint to delay mitosis. May function as a sensor that monitors the oxidative states and mediates appropriate cellular responses such as secretion of paracrine signals and attenuation of proliferation. May mediate ths accumulation of intracellular inositol phosphates at acidic pH through proton-sensing activity. The polypeptide is Probable G-protein coupled receptor 132 (Gpr132) (Mus musculus (Mouse)).